We begin with the raw amino-acid sequence, 685 residues long: METESDDATITVVKDMRVRLENRIRTQHDAHLDLLSSLQSIVPDIVPSLDLSLKLISSFTNRPFVATPPLPEPKVEKKHHPIVKLGTQLQQLHGHDSKSMLVDSNQRDAEADGSSGSPMALVRAMVAECLLQRVPFSPTDSSTVLRKLENDQNARPAEKAALRDLGGECGPILAVETALKSMAEENGSVELEEFEVSGKPRIMVLAIDRTRLLKELPESFQGNNESNRVVETPNSIENATVSGGGFGVSGSGNFPRPEMWGGDPNMGFRPMMNAPRGMQMMGMHHPMGIMGRPPPFPLPLPLPVPSNQKLRSEEEDLKDVEALLSKKSFKEKQQSRTGEELLDLIHRPTAKEAATAAKFKSKGGSQVKYYCRYLTKEDCRLQSGSHIACNKRHFRRLIASHTDVSLGDCSFLDTCRHMKTCKYVHYELDMADAMMAGPDKALKPLRADYCSEAELGEAQWINCDIRSFRMDILGTFGVVMADPPWDIHMELPYGTMADDEMRTLNVPSLQTDGLIFLWVTGRAMELGRECLELWGYKRVEEIIWVKTNQLQRIIRTGRTGHWLNHSKEHCLVGIKGNPEVNRNIDTDVIVAEVRETSRKPDEMYAMLERIMPRARKLELFARMHNAHAGWLSLGNQLNGVRLINEGLRARFKASYPEIDVQPPSPPRASAMETDNEPMAIDSITA.

Residues 464–465 (DI) and aspartate 482 each bind S-adenosyl-L-methionine. The positively charged region required for RNA-binding stretch occupies residues 552–565 (RIIRTGRTGHWLNH). Residues lysine 599, 622–625 (RMHN), and 635–636 (NQ) contribute to the S-adenosyl-L-methionine site. Residues 657–685 (EIDVQPPSPPRASAMETDNEPMAIDSITA) form a disordered region. Serine 664 is modified (phosphoserine).

This sequence belongs to the MT-A70-like family. In terms of assembly, interacts with FIP37. Interacts with MTB. Associates with MTB, FIP37, VIR and HAKAI to form the m6A writer complex which is essential for adenosine methylation at specific mRNA sequences.

The protein localises to the nucleus. It catalyses the reaction an adenosine in mRNA + S-adenosyl-L-methionine = an N(6)-methyladenosine in mRNA + S-adenosyl-L-homocysteine + H(+). Functionally, catalytic subunit of the N6-methyltransferase complex, a multiprotein complex that mediates N6-methyladenosine (m6A) methylation at the 5'-[AG]GAC-3' consensus sites of some mRNAs. Associates with MTB, FIP37, VIR and HAKAI to form the m6A writer complex which is essential for adenosine methylation at specific mRNA sequences. N6-methyladenosine (m6A) plays a role in mRNA stability, processing, translation efficiency and editing. In Arabidopsis thaliana (Mouse-ear cress), this protein is N(6)-adenosine-methyltransferase MT-A70-like.